The chain runs to 279 residues: Lactose operon transcription activator (279 aa).

Residues 174–272 (QHAVDFINTN…EISASEYRHH (99 aa)) form the HTH araC/xylS-type domain. 2 consecutive DNA-binding regions (H-T-H motif) follow at residues 191–212 (EDVA…KKNL) and 239–262 (ISDI…TKHF).

Functionally, transcriptional regulator of the lacPH genes for lactose utilization. The protein is Lactose operon transcription activator (lacR) of Staphylococcus xylosus.